A 2291-amino-acid chain; its full sequence is Protein Ycf2 (2291 aa).

1645-1652 provides a ligand contact to ATP; the sequence is GSIGTGRS.

The protein belongs to the Ycf2 family.

It localises to the plastid. It is found in the chloroplast stroma. Its function is as follows. Probable ATPase of unknown function. Its presence in a non-photosynthetic plant (Epifagus virginiana) and experiments in tobacco indicate that it has an essential function which is probably not related to photosynthesis. This chain is Protein Ycf2, found in Olimarabidopsis pumila (Dwarf rocket).